A 304-amino-acid polypeptide reads, in one-letter code: RING-H2 finger protein ATL2 (304 aa).

The chain crosses the membrane as a helical span at residues 30–50 (IMLSAIVILFFVVILMVFLHL). The RING-type; atypical zinc finger occupies 119 to 161 (CAVCLSEFEESETGRVLPNCQHTFHVDCIDMWFHSHSTCPLCR). Residues 194–304 (EPSSSSGLTD…DIERGGEESR (111 aa)) form a disordered region. Over residues 227 to 244 (VPRRTFSEFEDELTRRDS) the composition is skewed to basic and acidic residues. The segment covering 283–293 (PTLSCRIQMTE) has biased composition (polar residues). Residues 295–304 (DIERGGEESR) show a composition bias toward basic and acidic residues.

It belongs to the RING-type zinc finger family. ATL subfamily. Preferentially expressed around the apical meristem region.

It is found in the membrane. It catalyses the reaction S-ubiquitinyl-[E2 ubiquitin-conjugating enzyme]-L-cysteine + [acceptor protein]-L-lysine = [E2 ubiquitin-conjugating enzyme]-L-cysteine + N(6)-ubiquitinyl-[acceptor protein]-L-lysine.. It functions in the pathway protein modification; protein ubiquitination. In terms of biological role, may be involved in the early steps of the plant defense signaling pathway. The protein is RING-H2 finger protein ATL2 (ATL2) of Arabidopsis thaliana (Mouse-ear cress).